Here is a 211-residue protein sequence, read N- to C-terminus: MAIQEIRHPLIRHKLGLLRRADISTKNFRELAQEVTMLLTYEATKDLPVVDCEIEGWAGNVTTQRIAGKKITIVPILRAGIGMLDGVLNLIPSAKVSVLGLERDEATLEVRTYYKKLVPDVANRIAMIIDPMLATGNSLVAAIDVLKASGCKDIRVMVLVAAPEGIAKVETAHPDIQLYTASIDNGLNEHGYIVPGLGDAGDKIFGSVQKD.

Residues R78, R103, and 130–138 (DPMLATGNS) contribute to the 5-phospho-alpha-D-ribose 1-diphosphate site. Residues I193 and 198–200 (GDA) each bind uracil. A 5-phospho-alpha-D-ribose 1-diphosphate-binding site is contributed by D199.

This sequence belongs to the UPRTase family. Mg(2+) serves as cofactor.

The enzyme catalyses UMP + diphosphate = 5-phospho-alpha-D-ribose 1-diphosphate + uracil. It participates in pyrimidine metabolism; UMP biosynthesis via salvage pathway; UMP from uracil: step 1/1. With respect to regulation, allosterically activated by GTP. Its function is as follows. Catalyzes the conversion of uracil and 5-phospho-alpha-D-ribose 1-diphosphate (PRPP) to UMP and diphosphate. The chain is Uracil phosphoribosyltransferase from Acinetobacter baumannii (strain ATCC 17978 / DSM 105126 / CIP 53.77 / LMG 1025 / NCDC KC755 / 5377).